A 316-amino-acid chain; its full sequence is Transaldolase A (316 aa).

Lys-131 functions as the Schiff-base intermediate with substrate in the catalytic mechanism.

It belongs to the transaldolase family. Type 1 subfamily. In terms of assembly, homodimer.

Its subcellular location is the cytoplasm. The catalysed reaction is D-sedoheptulose 7-phosphate + D-glyceraldehyde 3-phosphate = D-erythrose 4-phosphate + beta-D-fructose 6-phosphate. It functions in the pathway carbohydrate degradation; pentose phosphate pathway; D-glyceraldehyde 3-phosphate and beta-D-fructose 6-phosphate from D-ribose 5-phosphate and D-xylulose 5-phosphate (non-oxidative stage): step 2/3. In terms of biological role, transaldolase is important for the balance of metabolites in the pentose-phosphate pathway. The chain is Transaldolase A from Shigella flexneri.